The chain runs to 126 residues: Succinate dehydrogenase hydrophobic membrane anchor subunit (126 aa).

Over 1–24 (MVYDFKAEIVKAKNSGSAKSGSHH) the chain is Cytoplasmic. Residues 25 to 45 (WLLQRVTGIILALCSVWLIYF) form a helical membrane-spanning segment. The Periplasmic segment spans residues 46–68 (TLTNKNNDINIIMLWELKKPFNV). A helical transmembrane segment spans residues 69–90 (VALLITVVISLYHAMLGMRVVI). Position 81 (His-81) interacts with heme. The Cytoplasmic portion of the chain corresponds to 91-100 (EDYISYHKLR). An a ubiquinone-binding site is contributed by Tyr-93. Residues 101-124 (NTLIIIVQLFCIVTIVAFVVALFY) traverse the membrane as a helical segment.

Part of an enzyme complex containing four subunits: a flavoprotein, an iron-sulfur protein, plus two membrane-anchoring proteins, SdhC and SdhD. Heme serves as cofactor.

Its subcellular location is the cell inner membrane. Its pathway is carbohydrate metabolism; tricarboxylic acid cycle. Membrane-anchoring subunit of succinate dehydrogenase (SDH). The polypeptide is Succinate dehydrogenase hydrophobic membrane anchor subunit (sdhD) (Rickettsia conorii (strain ATCC VR-613 / Malish 7)).